The chain runs to 74 residues: Cytochrome c oxidase assembly factor 5 (74 aa).

The region spanning 27 to 65 is the CHCH domain; it reads QSDCVLKEGKSPRQCLKEGNCKALKYSFFECKRSMLDAR. Positions 30-41 match the Cx10C motif motif; that stretch reads CVLKEGKSPRQC. 2 disulfide bridges follow: cysteine 30-cysteine 57 and cysteine 41-cysteine 47. The residue at position 37 (serine 37) is a Phosphoserine. A Cx9C motif motif is present at residues 47–57; sequence CKALKYSFFEC.

The protein belongs to the PET191 family.

Functionally, involved in an early step of the mitochondrial complex IV assembly process. The sequence is that of Cytochrome c oxidase assembly factor 5 (COA5) from Bos taurus (Bovine).